The sequence spans 162 residues: uncharacterized protein (162 aa).

This is an uncharacterized protein from Acidianus sp. F28 (AFV-2).